Here is a 422-residue protein sequence, read N- to C-terminus: UDP-N-acetylmuramoylalanine--D-glutamate ligase (422 aa).

ATP is bound at residue 102-108 (GTNGKTT).

Belongs to the MurCDEF family.

Its subcellular location is the cytoplasm. The enzyme catalyses UDP-N-acetyl-alpha-D-muramoyl-L-alanine + D-glutamate + ATP = UDP-N-acetyl-alpha-D-muramoyl-L-alanyl-D-glutamate + ADP + phosphate + H(+). The protein operates within cell wall biogenesis; peptidoglycan biosynthesis. In terms of biological role, cell wall formation. Catalyzes the addition of glutamate to the nucleotide precursor UDP-N-acetylmuramoyl-L-alanine (UMA). The polypeptide is UDP-N-acetylmuramoylalanine--D-glutamate ligase (Helicobacter pylori (strain J99 / ATCC 700824) (Campylobacter pylori J99)).